A 180-amino-acid chain; its full sequence is NADH-quinone oxidoreductase subunit I (180 aa).

4Fe-4S ferredoxin-type domains follow at residues 50 to 80 (LTRD…LQKA) and 90 to 119 (EFFR…LTPD). [4Fe-4S] cluster is bound by residues Cys60, Cys63, Cys66, Cys70, Cys99, Cys102, Cys105, and Cys109.

The protein belongs to the complex I 23 kDa subunit family. As to quaternary structure, NDH-1 is composed of 13 different subunits. Subunits NuoA, H, J, K, L, M, N constitute the membrane sector of the complex. It depends on [4Fe-4S] cluster as a cofactor.

It localises to the cell inner membrane. The catalysed reaction is a quinone + NADH + 5 H(+)(in) = a quinol + NAD(+) + 4 H(+)(out). NDH-1 shuttles electrons from NADH, via FMN and iron-sulfur (Fe-S) centers, to quinones in the respiratory chain. The immediate electron acceptor for the enzyme in this species is believed to be ubiquinone. Couples the redox reaction to proton translocation (for every two electrons transferred, four hydrogen ions are translocated across the cytoplasmic membrane), and thus conserves the redox energy in a proton gradient. This is NADH-quinone oxidoreductase subunit I from Shigella sonnei (strain Ss046).